The primary structure comprises 146 residues: VHLTGEEKSAVAALWSKVNVDEVGGEALGRLLVVYPWTQRFFESFGALSSPDAVMGNPKVKAHGKKVLGAFSDGLAHLDNLKGTFAQLSELHCDKLHVDPENFRLLGNVLVCVLARNFGKEFTPRVQAAFQKVVAGVATALAHKYH.

The Globin domain occupies 2-146 (HLTGEEKSAV…VATALAHKYH (145 aa)). At serine 50 the chain carries Phosphoserine. Histidine 63 and histidine 92 together coordinate heme b.

Belongs to the globin family. As to quaternary structure, heterotetramer of two delta chains and two alpha chains. Red blood cells.

This is Hemoglobin subunit delta (HBD) from Leontocebus nigricollis (Black-mantled tamarin).